The sequence spans 407 residues: MAEDPQGGGAGGPQHPVPSGSHSSFPEYELPELHTRVFHVGAFGELWRGRLGAQDLSLNEPQAAAQPTDGEASNNGFEDAAVAEDLGCSLEAAAELRVVCGLDKLRCLGEDEDPEVIPENTDLVTLCVRKGLLDYREENITIDRACRQETFAYEMESHALGKKPENPADMIEEGESILSVNILYPVIFNKHREHKPYQTVLVLGSQKLTELRDSICCVSDLQIGGEFSNAPDQAPEHISKDLYKSAFFYFEGTFYNDKRYPECRDLSRTIIEWSESHDRGYGKFQTARMEDFTFNDLNIKLGFPYLYCHQGDCEHVVVITDIRLVHHDDCLDRTLYPLLTKKHWLWTRKCFVCKMYTARWVTNNDTFAPEDPCFFCDVCFRMLHYDSEGNKLGEFLAYPYVDPGTFN.

Residues 1–12 (MAEDPQGGGAGG) show a composition bias toward gly residues. The tract at residues 1 to 26 (MAEDPQGGGAGGPQHPVPSGSHSSFP) is disordered.

This sequence belongs to the SNAPC3/SRD2 family. Part of the SNAPc complex composed of 5 subunits: SNAPC1, SNAPC2, SNAPC3, SNAPC4 and SNAPC5. SNAPC3 interacts with SNAPC1.

It is found in the nucleus. In terms of biological role, part of the SNAPc complex required for the transcription of both RNA polymerase II and III small-nuclear RNA genes. Binds to the proximal sequence element (PSE), a non-TATA-box basal promoter element common to these 2 types of genes. Recruits TBP and BRF2 to the U6 snRNA TATA box. This chain is snRNA-activating protein complex subunit 3 (Snapc3), found in Rattus norvegicus (Rat).